Here is a 406-residue protein sequence, read N- to C-terminus: ATP phosphoribosyltransferase regulatory subunit (406 aa).

The protein belongs to the class-II aminoacyl-tRNA synthetase family. HisZ subfamily. In terms of assembly, heteromultimer composed of HisG and HisZ subunits.

The protein resides in the cytoplasm. It participates in amino-acid biosynthesis; L-histidine biosynthesis; L-histidine from 5-phospho-alpha-D-ribose 1-diphosphate: step 1/9. Functionally, required for the first step of histidine biosynthesis. May allow the feedback regulation of ATP phosphoribosyltransferase activity by histidine. The chain is ATP phosphoribosyltransferase regulatory subunit from Methylococcus capsulatus (strain ATCC 33009 / NCIMB 11132 / Bath).